A 349-amino-acid chain; its full sequence is MTFAKGILAALALAAAVGQASATELEHWPAPAARQLNALIEANANKGAYAVFDMDNTSYRYDLEESLLPYLEMKGVLTRDRLDPSLKLIPFKDQAGHKESLFSYYYRLCEIDDMVCYPWVAQVFSGFTLRELKGYVDELMAYGKPIPATYYDGDKLATLDVEPPRVFSGQRELYNKLMENGIEVYVISAAHEELVRMVAADPRYGYNAKPENVIGVTTLLKNRKTGELTTARKQIAEGKYDPKANLDLEVTPYLWTPATWMAGKQAAILTYIDRWKRPILVAGDTPDSDGYMLFNGTAENGVHLWVNRKAKYMEQINGMIKQHSAAQAKAGLPVTADRNWVIVTPEQIQ.

Positions 1 to 22 are cleaved as a signal peptide; that stretch reads MTFAKGILAALALAAAVGQASA. Asp53 (nucleophile) is an active-site residue. 2 residues coordinate Mg(2+): Asp53 and Asp55. Asp55 (proton donor) is an active-site residue. Residues Cys109 and Cys116 are joined by a disulfide bond. Asp284 provides a ligand contact to Mg(2+).

Belongs to the HAD-like hydrolase superfamily. In terms of assembly, monomer. Homodimer. Homotetramer. It depends on Mg(2+) as a cofactor.

The protein localises to the periplasm. It catalyses the reaction phosphocholine + H2O = choline + phosphate. It carries out the reaction phosphoethanolamine + H2O = ethanolamine + phosphate. Activity is inhibited by high concentrations of phosphorylcholine, phosphorylethanolamine, choline or betaine. Displays different properties depending on the substrate utilized, the pH conditions as well as the presence or absence of metal ions. At pH 5, activity is inhibited by Al(3+) ions. At pH 7.4, the enzyme cannot catalyze the hydrolysis of pNPP, phosphorylethanolamine is a poor substrate in either the presence or absence of divalent cations, and activity measured with phosphorylcholine is independent of divalent cations or is not inhibited by Al(3+) ions. Mg(2+) produces identical activation at pH 5.0 and 7.4, but Zn(2+) is an activator at pH 5.0 and becomes an inhibitor at pH 7.4. This inhibition at pH 7.4 may be due to a transition from octahedral to tetrahedral coordination geometry, which is produced by hydrolysis of the Zn-hexacoordinated complex. Functionally, catalyzes the hydrolysis of phosphorylcholine (PCho) to produce choline and inorganic phosphate. Can also hydrolyze phosphorylethanolamine and the nonphysiological substrate p-nitrophenylphosphate (pNPP). Shows higher affinity and catalytic efficiency with phosphorylcholine as substrate. Its function is as follows. Is probably involved in virulence. The bacteria may break down various host compounds or host cell membranes through the coordinated action of phospholipase C and phosphocholine phosphatase. The final consequence of the action of these enzymes is an increase of the free choline concentration, which may promote the pathogenicity of P.aeruginosa. This chain is Phosphorylcholine phosphatase, found in Pseudomonas aeruginosa (strain ATCC 15692 / DSM 22644 / CIP 104116 / JCM 14847 / LMG 12228 / 1C / PRS 101 / PAO1).